The following is a 185-amino-acid chain: Ribosome-recycling factor (185 aa).

It belongs to the RRF family.

Its subcellular location is the cytoplasm. In terms of biological role, responsible for the release of ribosomes from messenger RNA at the termination of protein biosynthesis. May increase the efficiency of translation by recycling ribosomes from one round of translation to another. This chain is Ribosome-recycling factor, found in Mycolicibacterium vanbaalenii (strain DSM 7251 / JCM 13017 / BCRC 16820 / KCTC 9966 / NRRL B-24157 / PYR-1) (Mycobacterium vanbaalenii).